The following is an 86-amino-acid chain: Small ribosomal subunit protein bS20 (86 aa).

Residues 1-27 (MANSKSAKKRAIQAEKRRQHNASRRSM) are compositionally biased toward basic residues. Positions 1 to 28 (MANSKSAKKRAIQAEKRRQHNASRRSMM) are disordered.

It belongs to the bacterial ribosomal protein bS20 family.

Functionally, binds directly to 16S ribosomal RNA. The protein is Small ribosomal subunit protein bS20 of Vibrio parahaemolyticus serotype O3:K6 (strain RIMD 2210633).